A 386-amino-acid chain; its full sequence is IgA receptor (386 aa).

The N-terminal stretch at 1 to 41 (MARKDTNKQYSLRKLKTGTASVAVAVAVLGAGFANQTEVKA) is a signal peptide. The igA-binding stretch occupies residues 42-152 (AEIKKPQADS…QKKHQQEQQQ (111 aa)). Basic and acidic residues-rich tracts occupy residues 79 to 88 (YADDKEKDPQ), 97 to 128 (QDLR…EQLE), 134 to 166 (EADK…DKQI), 174 to 201 (LSRD…EKQI), 209 to 221 (LSRD…EAKK), 233 to 243 (EHQKLKEDKQI), and 251 to 267 (LSRD…KVEA). Disordered regions lie at residues 79 to 221 (YADD…EAKK) and 233 to 268 (EHQK…VEAD). 3 C repeats span residues 158–192 (QKLA…EAEH), 193–227 (QKLK…EADL), and 235–269 (QKLK…EADL). D repeat units follow at residues 302 to 307 (ARLEAE), 308 to 313 (AKALKE), 316 to 321 (AKQAEE), and 323 to 328 (AKLKGN). The segment at 323–360 (AKLKGNQTPNAKVAPQANRSRSAMTQQKRTLPSTGETA) is disordered. Over residues 339–359 (ANRSRSAMTQQKRTLPSTGET) the composition is skewed to polar residues. The short motif at 353–357 (LPSTG) is the LPXTG sorting signal element. Thr356 is subject to Pentaglycyl murein peptidoglycan amidated threonine. Positions 357–386 (GETANPFFTAAAATVMVSAGMLALKRKEEN) are cleaved as a propeptide — removed by sortase.

It belongs to the M protein family.

The protein localises to the secreted. The protein resides in the cell wall. In terms of biological role, binds IgA of both subclasses, and also binds polyclonal IgG weakly. The protein is IgA receptor (arp4) of Streptococcus pyogenes.